Here is a 609-residue protein sequence, read N- to C-terminus: Pentatricopeptide repeat-containing protein At1g03540 (609 aa).

PPR repeat units follow at residues 25–59 (SAPTKQSRILELCKLGQLTEAIRILNSTHSSEIPA), 60–94 (TPKLYASLLQTCNKVFSFIHGIQFHAHVVKSGLET), 95–126 (DRNVGNSLLSLYFKLGPGMRETRRVFDGRFVK), 127–161 (DAISWTSMMSGYVTGKEHVKALEVFVEMVSFGLDA), 162–196 (NEFTLSSAVKACSELGEVRLGRCFHGVVITHGFEW), 197–227 (NHFISSTLAYLYGVNREPVDARRVFDEMPEP), 228–263 (DVICWTAVLSAFSKNDLYEEALGLFYAMHRGKGLVP), 264–298 (DGSTFGTVLTACGNLRRLKQGKEIHGKLITNGIGS), 299–329 (NVVVESSLLDMYGKCGSVREARQVFNGMSKK), 330–364 (NSVSWSALLGGYCQNGEHEKAIEIFREMEEKDLYC), 396–426 (NVIVESALIDLYGKSGCIDSASRVYSKMSIR), 427–461 (NMITWNAMLSALAQNGRGEEAVSFFNDMVKKGIKP), 462–497 (DYISFIAILTACGHTGMVDEGRNYFVLMAKSYGIKP), and 498–532 (GTEHYSCMIDLLGRAGLFEEAENLLERAECRNDAS). Positions 533–609 (LWGVLLGPCA…TVGQSWIDAH (77 aa)) are type E motif.

Belongs to the PPR family. PCMP-E subfamily.

This is Pentatricopeptide repeat-containing protein At1g03540 (PCMP-E4) from Arabidopsis thaliana (Mouse-ear cress).